A 462-amino-acid chain; its full sequence is Tryptophan dimethylallyltransferase ifgA (462 aa).

L-tryptophan-binding positions include 83–84 (IL) and glutamate 92. Arginine 103, lysine 189, and tyrosine 191 together coordinate substrate. The L-tryptophan site is built by tyrosine 193 and arginine 246. Substrate-binding residues include arginine 259, lysine 261, tyrosine 263, glutamine 345, and tyrosine 347.

The protein belongs to the tryptophan dimethylallyltransferase family. Homodimer.

The catalysed reaction is L-tryptophan + dimethylallyl diphosphate = 4-(3-methylbut-2-enyl)-L-tryptophan + diphosphate. It participates in alkaloid biosynthesis; ergot alkaloid biosynthesis. Functionally, tryptophan dimethylallyltransferase; part of the gene cluster that mediates the biosynthesis of isofumigaclavines, fungal ergot alkaloids. The tryptophan dimethylallyltransferase ifgA catalyzes the first step of ergot alkaloid biosynthesis by condensing dimethylallyl diphosphate (DMAP) and tryptophan to form 4-dimethylallyl-L-tryptophan. The second step is catalyzed by the methyltransferase ifgB that methylates 4-dimethylallyl-L-tryptophan in the presence of S-adenosyl-L-methionine, resulting in the formation of N-methyl-dimethylallyl-L-tryptophan. The catalase ifgD and the FAD-dependent oxidoreductase ifgC then transform N-methyl-dimethylallyl-L-tryptophan to chanoclavine-I which is further oxidized by ifgE in the presence of NAD(+), resulting in the formation of chanoclavine-I aldehyde. The chanoclavine-I aldehyde reductases ifgG and/or fgaOx3 reduce chanoclavine-I aldehyde to dihydrochanoclavine-I aldehyde that spontaneously dehydrates to form 6,8-dimethyl-6,7-didehydroergoline. The festuclavine dehydrogenases ifgF1 and/or ifgF2 then catalyze the reduction of 6,8-dimethyl-6,7-didehydroergoline to form festuclavine. Hydrolysis of festuclavine by a yet undetermined cytochrome P450 monooxygenase (called ifgH) then leads to the formation of isofumigaclavine B which is in turn acetylated by ifgI to isofumigaclavine A. Penicillium roqueforti has interestingly at least two sets of genes for the consumption of chanoclavine-I aldehyde on three different loci, the OYEs ifgG/fgaOx3 and the festuclavine synthase homologs ifgF1/ifgF2. The reason for the duplication of these genes is unclear, probably to ensure the conversion of chanoclavine-I aldehyde by differential gene expression under various environmental conditions. The polypeptide is Tryptophan dimethylallyltransferase ifgA (Penicillium roqueforti (strain FM164)).